We begin with the raw amino-acid sequence, 259 residues long: Small ribosomal subunit protein eS4 (259 aa).

The S4 RNA-binding domain maps to 41 to 100 (LPLSLFLRNRLKYALNYTEAKKILTQRVVRVDGKVRTCHKFPTGFMDVVAIERTNEYFRM).

Belongs to the eukaryotic ribosomal protein eS4 family.

This chain is Small ribosomal subunit protein eS4 (rps-4), found in Caenorhabditis elegans.